The sequence spans 335 residues: Beta-ketoacyl-[acyl-carrier-protein] synthase III (335 aa).

Residues Cys-117 and His-258 contribute to the active site. Residues 259-263 (QANQR) are ACP-binding. Residue Asn-288 is part of the active site.

The protein belongs to the thiolase-like superfamily. FabH family. Homodimer.

It is found in the cytoplasm. It catalyses the reaction malonyl-[ACP] + acetyl-CoA + H(+) = 3-oxobutanoyl-[ACP] + CO2 + CoA. It participates in lipid metabolism; fatty acid biosynthesis. Its function is as follows. Catalyzes the condensation reaction of fatty acid synthesis by the addition to an acyl acceptor of two carbons from malonyl-ACP. Catalyzes the first condensation reaction which initiates fatty acid synthesis and may therefore play a role in governing the total rate of fatty acid production. Possesses both acetoacetyl-ACP synthase and acetyl transacylase activities. Its substrate specificity determines the biosynthesis of branched-chain and/or straight-chain of fatty acids. The protein is Beta-ketoacyl-[acyl-carrier-protein] synthase III of Synechococcus elongatus (strain ATCC 33912 / PCC 7942 / FACHB-805) (Anacystis nidulans R2).